We begin with the raw amino-acid sequence, 208 residues long: Small ribosomal subunit protein uS4 (208 aa).

An S4 RNA-binding domain is found at 98–164; the sequence is SRLDNVVYRM…DRIKFALELA (67 aa).

It belongs to the universal ribosomal protein uS4 family. Part of the 30S ribosomal subunit. Contacts protein S5. The interaction surface between S4 and S5 is involved in control of translational fidelity.

One of the primary rRNA binding proteins, it binds directly to 16S rRNA where it nucleates assembly of the body of the 30S subunit. Functionally, with S5 and S12 plays an important role in translational accuracy. In Nitrosococcus oceani (strain ATCC 19707 / BCRC 17464 / JCM 30415 / NCIMB 11848 / C-107), this protein is Small ribosomal subunit protein uS4.